A 1969-amino-acid chain; its full sequence is Cytadherence high molecular weight protein 1 (1969 aa).

An HAT 1 repeat occupies 148-166; it reads YYDENEEWVWTGYFDEDNK. Positions 174–244 are disordered; the sequence is KPAEVEALEE…QPESEQEGSG (71 aa). Acidic residues-rich tracts occupy residues 179 to 207 and 214 to 242; these read EALE…EVVE and QPEE…EQEG. HAT repeat units follow at residues 258-278, 300-331, and 333-353; these read YYDE…NNFV and AQQE…VEGY. A disordered region spans residues 294–319; it reads QVEEYSAQQEQVQEEYEQQPEQEGSG. The tract at residues 365–393 is disordered; sequence VSEEQYSESVSEEQEPASEEQVAEEPAQV. Residues 374 to 387 are compositionally biased toward acidic residues; sequence VSEEQEPASEEQVA. 2 HAT repeats span residues 477 to 497 and 959 to 997; these read YYDE…GMFI and LTLV…DQNN. Positions 1000–1027 form a coiled coil; the sequence is SDKDSKTQKVDQLIEEFNKQEAIKKTEE. One copy of the HAT 7 repeat lies at 1029 to 1067; sequence EAKKASEPFYNKYIGNKQFGYYNDKNVWIWNGYFDENDQ. Coiled coils occupy residues 1082–1190, 1547–1621, and 1758–1790; these read IEDE…FDNF, SVNQ…LALT, and NRGD…NKKV.

The protein resides in the cell projection. Its subcellular location is the attachment organelle membrane. Its function is as follows. Component of the cytoskeleton-like structure which stabilizes the shape of the wall-less Mycoplasma. This cytoskeleton-like network of accessory proteins containing HMW proteins 1 to 5 allows the proper anchoring of cytadhesin proteins in the mycoplasmal membrane at the attachment organelle. This Mycoplasmoides gallisepticum (strain R(low / passage 15 / clone 2)) (Mycoplasma gallisepticum) protein is Cytadherence high molecular weight protein 1 (hlp1).